The chain runs to 332 residues: Potassium channel subfamily K member 17 (332 aa).

At 1 to 20 (MYRPRARAAPEGRVRGCAVP) the chain is on the cytoplasmic side. A helical transmembrane segment spans residues 21 to 43 (STVLLLLAYLAYLALGTGVFWTL). 2 N-linked (GlcNAc...) asparagine glycosylation sites follow: Asn65 and Asn94. An intramembrane region (pore-forming) is located at residues 106 to 124 (SFFFSVSTITTIGYGNLSP). Thr116, Ile117, Gly118, and Tyr119 together coordinate K(+). The interval 116–121 (TIGYGN) is selectivity filter 1. A helical transmembrane segment spans residues 128–148 (AARLFCIFFALVGIPLNLVVL). Over 149-179 (NRLGHLMQQGVNHWASRLGGTWQDPDKARWL) the chain is Cytoplasmic. Residues 180-200 (AGSGALLSGLLLFLLLPPLLF) traverse the membrane as a helical segment. The pore-forming intramembrane region spans 211-230 (GFYFAFITLSTVGFGDYVIG). Positions 221, 222, 223, and 224 each coordinate K(+). A selectivity filter 2 region spans residues 221–226 (TVGFGD). A helical membrane pass occupies residues 244–264 (MVSLWILFGMAWLALIIKLIL). Topologically, residues 265–332 (SQLETPGRVC…AHAAGCGKDS (68 aa)) are cytoplasmic. Positions 287 to 312 (SQSWRQGPDREPESHSPQQGCYPEGP) are disordered.

Belongs to the two pore domain potassium channel (TC 1.A.1.8) family. In terms of assembly, homodimer; disulfide-linked. Heterodimer with KCNK5 and KCNK16. Widely expressed. Highly expressed in aorta and coronary artery. Expressed in pancreas, in both endocrine (alpha, beta, gamma, delta, and epsilon) and exocrine (acinar and ductal) cells.

Its subcellular location is the cell membrane. It carries out the reaction K(+)(in) = K(+)(out). The enzyme catalyses Rb(+)(in) = Rb(+)(out). The catalysed reaction is Cs(+)(in) = Cs(+)(out). Its activity is regulated as follows. Inhibited by Ba(2+), quinidine, chloroform and halothane. Activated at alkaline pH. Activated by quinine and isoflurane. Functionally, k(+) channel that conducts voltage-dependent outward rectifying currents upon membrane depolarization. Voltage sensing is coupled to K(+) electrochemical gradient in an 'ion flux gating' mode where outward but not inward ion flow opens the gate. Homo- and heterodimerizes to form functional channels with distinct regulatory and gating properties. Present in the cardiac conduction system where it may regulate action potential duration and beating frequency of cardiac myocytes. Permeable to other monovalent cations such as Rb(+) and Cs(+). This chain is Potassium channel subfamily K member 17, found in Homo sapiens (Human).